Reading from the N-terminus, the 637-residue chain is 1-deoxy-D-xylulose-5-phosphate synthase (637 aa).

Residues H76 and 117-119 (GHS) each bind thiamine diphosphate. Mg(2+) is bound at residue D148. Thiamine diphosphate-binding positions include 149-150 (GA), N177, Y294, and E381. N177 provides a ligand contact to Mg(2+).

The protein belongs to the transketolase family. DXPS subfamily. Homodimer. The cofactor is Mg(2+). It depends on thiamine diphosphate as a cofactor.

The enzyme catalyses D-glyceraldehyde 3-phosphate + pyruvate + H(+) = 1-deoxy-D-xylulose 5-phosphate + CO2. Its pathway is metabolic intermediate biosynthesis; 1-deoxy-D-xylulose 5-phosphate biosynthesis; 1-deoxy-D-xylulose 5-phosphate from D-glyceraldehyde 3-phosphate and pyruvate: step 1/1. Its function is as follows. Catalyzes the acyloin condensation reaction between C atoms 2 and 3 of pyruvate and glyceraldehyde 3-phosphate to yield 1-deoxy-D-xylulose-5-phosphate (DXP). The sequence is that of 1-deoxy-D-xylulose-5-phosphate synthase from Neisseria gonorrhoeae (strain ATCC 700825 / FA 1090).